The chain runs to 202 residues: Dephospho-CoA kinase (202 aa).

A DPCK domain is found at 4–202 (VIGLTGGIAT…TDKGFINKER (199 aa)). 12-17 (ATGKST) contributes to the ATP binding site.

It belongs to the CoaE family.

It is found in the cytoplasm. It catalyses the reaction 3'-dephospho-CoA + ATP = ADP + CoA + H(+). It participates in cofactor biosynthesis; coenzyme A biosynthesis; CoA from (R)-pantothenate: step 5/5. Catalyzes the phosphorylation of the 3'-hydroxyl group of dephosphocoenzyme A to form coenzyme A. The polypeptide is Dephospho-CoA kinase (Staphylococcus haemolyticus (strain JCSC1435)).